A 1035-amino-acid chain; its full sequence is NACHT, LRR and PYD domains-containing protein 3 (1035 aa).

The region spanning 1-93 is the Pyrin domain; sequence MKMMSVRCKL…WEKAKKDQPE (93 aa). Position 5 is a phosphoserine (S5). A disulfide bridge links C8 with C106. Y13 is subject to Phosphotyrosine. C128 carries the S-palmitoyl cysteine lipid modification. The segment at 129-132 is required for binding to phosphatidylinositol 4-phosphate (PtdIns4P); it reads KKKK. Phosphotyrosine occurs at positions 134 and 138. Residues 138 to 208 form the FISNA domain; the sequence is YRRHVRSRFY…SSLKLELLFE (71 aa). S159 is subject to Phosphoserine. Y166 is modified (phosphotyrosine). T167 provides a ligand contact to ATP. S199 carries the post-translational modification Phosphoserine. The NACHT domain occupies 218–534; the sequence is HTVVFQGAAG…EFFAAMYYLL (317 aa). ATP is bound at residue 224–231; sequence GAAGIGKT. S263 and S293 each carry phosphoserine. K322 is covalently cross-linked (Glycyl lysine isopeptide (Lys-Gly) (interchain with G-Cter in ubiquitin)). S332 bears the Phosphoserine mark. Residues 353–357 carry the KFERQ-like motif 1 motif; the sequence is LEKLQ. Residue K428 forms a Glycyl lysine isopeptide (Lys-Gly) (interchain with G-Cter in ubiquitin) linkage. H520 lines the ATP pocket. A KFERQ-like motif 2 motif is present at residues 603 to 607; it reads QVRLE. A Glycyl lysine isopeptide (Lys-Gly) (interchain with G-Cter in ubiquitin) cross-link involves residue K689. Phosphoserine is present on residues S727 and S734. LRR repeat units follow at residues 741–761, 770–791, 798–818, 827–848, and 855–875; these read SLTE…RVLC, NIQR…NISS, KLVE…RLLC, NLQK…DLAL, and SLTR…QVLC. The short motif at 797–801 is the KFERQ-like motif 3 element; sequence QKLVE. S805 is modified (phosphoserine). 3 S-palmitoyl cysteine lipidation sites follow: C836, C837, and C843. Y860 is modified (phosphotyrosine). A Glycyl lysine isopeptide (Lys-Gly) (interchain with G-Cter in ubiquitin) cross-link involves residue K877. 4 LRR repeats span residues 884–905, 912–932, 941–962, and 969–990; these read NLQK…ALTS, NLTH…KLLC, KLQM…DLST, and SLRK…TLCE. The S-palmitoyl cysteine moiety is linked to residue C957. K972 is covalently cross-linked (Glycyl lysine isopeptide (Lys-Gly) (interchain with G-Cter in ubiquitin)). The KFERQ-like motif 4 motif lies at 990-994; the sequence is EVLKQ. S1034 carries the phosphoserine modification.

Belongs to the NLRP family. In terms of assembly, sensor component of NLRP3 inflammasomes; inflammasomes are supramolecular complexes that assemble in the cytosol in response to pathogens and other damage-associated signals and play critical roles in innate immunity and inflammation. The core of NLRP3 inflammasomes consists of a signal sensor component (NLRP3), an adapter (PYCARD/ASC), which recruits an effector pro-inflammatory caspase (CASP1 and, possibly, CASP4 and CASP5). Homodecamer; inactive NLRP3 forms homodecameric double-ring cages that hide pyrin domains within NACHT-LRR rings to avoid premature activation. Interacts (via pyrin domain) with PYCARD/ASC (via pyrin domain); interaction is direct. Interacts (via LRR repeat domain) with NEK7 (via N-terminus); the interaction is required for the formation of the complex NLRP3:PYCARD, oligomerization of PYCARD/ASC and activation of CASP1. Interacts (via LRR repeat domain) with NR4A1/Nur77 (via N-terminus); the interaction is direct, requires activation of NR4A1 by its ligands NBRE-containing dsDNA and lipopolysaccharide, and stimulates the association of NLRP3 with NEK7 for non-canonical NLRP3 inflammasome activation. Interacts with CARD8; leading to inhibit formation of the NLRP3 inflammasome. Interacts with MEFV; this interaction targets NLRP3 to degradation by autophagy, hence preventing excessive IL1B- and IL18-mediated inflammation. Interacts with EIF2AK2/PKR; this interaction requires EIF2AK2 activity, is accompanied by EIF2AK2 autophosphorylation and promotes inflammasome assembly in response to specific stimuli. Interacts with GBP5 (via DAPIN domain); this interaction promotes inflammasome assembly in response to microbial and soluble, but not crystalline, agents. Interacts with PML (isoform PML-1) (via the leucine-rich repeat (LRR) domain); PML-mediated increase in NLRP3 inflammasome activation does not depend upon this interaction. Interacts (via NACHT domain) with DHX33 (via DEAH box); NLRP3 activation in presence of cytosolic dsRNA is mediated by DHX33. Interacts (via NACHT and LRR domains) with ARRB2; this interaction is direct and inducible by polyunsaturated fatty acids (PUFAs). Interacts (via NACHT domain) with DDX3X under both LPS-primed and inflammasome-activating conditions. Interacts with IRF4 (via the LRR domain); this interaction is direct and is required for optimal IRF4 binding to IL4 promoter and efficient IL4 transactivation during differentiation of Th2 helper T-cells. Interacts with MAVS; promoting localization to mitochondria and activation of the NLRP3 inflammasome. Interacts with MARK4; promoting localization of NLRP3 to the microtubule organizing center (MTOC). Interacts with TRIM50; this interaction also promotes NLRP3 oligomerization and subsequent inflammasome activation. Interacts with IRGM; preventing NLRP3 inflammasome assembly and promoting NLRP3 degradation. Interacts (via NACHT and LLR domains) with ABHD8; this interaction is enhanced in the presence of NLRP3 inflammasome inducers, such as ATP, nigericin, silica, or alum. Interaction with ABHD8 leads the recruitment of ZDHHC12, hence facilitating NLRP3 palmitoylation and degradation by the chaperone-mediated autophagy pathway (CMA), therefore attenuating NLRP3 inflammasome activation. Phosphorylation by MAPK8/JNK1 increases inflammasome activation by promoting deubiquitination by BRCC3 and NLRP3 homooligomerization. Phosphorylation at Ser-805 by CSNK1A1 prevents inflammasome activation by preventing NEK7 recruitment. Phosphorylation at Ser-5 in the pyrin domain inhibits homomultimerization of NLRP3 and activation of the NLRP3 inflammasome: dephosphorylation by protein phosphatase 2A (PP2A) promotes assembly of the NLRP3 inflammasome. Phosphorylation at Ser-293 by PKD/PRKD1 promotes NLRP3 inflammasome assembly. Phosphorylation by ERK1/MAPK3 promotes NLRP3 inflammasome assembly. Phosphorylation by BTK (at Tyr-134, Tyr-138 and Tyr-166) in the region that mediates binding to phosphatidylinositol phosphate, promotes relocalization of NLRP3 and assembly of the NLRP3 inflammasome. Phosphorylation at Tyr-860 inhibits NLRP3 inflammasome assembly: dephosphorylation by PTPN22 promotes inflammasome activation. Phosphorylated by LATS1 and LATS2 at Ser-263 following palmitoylation by ZDHHC1, promoting its relocalization to the microtubule organizing center (MTOC), where NLRP3 is activated by NEK7, leading to inflammasome assembly and activation. In terms of processing, ubiquitinated; undergoes both 'Lys-48'- and 'Lys-63'-linked polyubiquitination. Ubiquitination does not lead to degradation, but inhibits inflammasome activation. Deubiquitination is catalyzed by BRCC3 and associated with NLRP3 activation and inflammasome assembly. This process can be induced by the activation of Toll-like receptors (by LPS), through a non-transcriptional pathway dependent on the mitochondrial production of reactive oxygen species, and by ATP. Ubiquitinated by TRIM31 via 'Lys-48'-linked ubiquitination, leading to its degradation by the proteasome. Ubiquitinated at Lys-689 by the SCF(FBXL2) complex, leading to its degradation by the proteasome. Ubiquitinated by TRIM35 via 'lys-48' and 'Lys-63'-linked ubiquitination leading to inhibition of NLRP3 inflammasome activation. Undergoes 'Lys-27'-linked polyubiquitination by MARCHF5, leading to NLRP3-NEK7 complex formation and NLRP3 oligomerization. Post-translationally, the disulfide bond in the pyrin domain might play a role in reactive oxygen species-mediated activation. Palmitoylation by ZDHHC12 promotes NLRP3 degradation by the chaperone-mediated autophagy pathway (CMA) and therefore limits NLRP3 inflammasome activation. Interaction with ZDHHC12, and hence NLRP3 palmitoylation, is greatly enhanced by ABHD8. Following palmitoylation, HSPA8/HSC70 recognizes and binds the KFERQ-like motifs on NLRP3 and promotes NLRP3 recruitment to lysosomes, where it is degraded via the chaperone-mediated autophagy pathway in a LAMP2-dependent process. Palmitoylation at Cys-836 and Cys-837 by ZDHHC5 enhances its binding to NEK7 leading to inflammasome assembly and activation. Palmitoylation at Cys-128 and Cys-957 by ZDHHC1 facilitates phosphorylation at Ser-263 by LATS1 and LATS2, promoting its relocalization to the microtubule organizing center (MTOC), where NLRP3 is activated by NEK7, leading to inflammasome assembly and activation. Depalmitoylated by ABHD17A. In terms of processing, degraded via selective autophagy following interaction with IRGM. IRGM promotes NLRP3 recruitment to autophagosome membranes, promoting its SQSTM1/p62-dependent autophagy-dependent degradation.

It is found in the cytoplasm. The protein resides in the cytosol. The protein localises to the inflammasome. Its subcellular location is the cytoskeleton. It localises to the microtubule organizing center. It is found in the golgi apparatus membrane. The protein resides in the endoplasmic reticulum. The protein localises to the mitochondrion. Its subcellular location is the secreted. It localises to the nucleus. It carries out the reaction ATP + H2O = ADP + phosphate + H(+). Under resting conditions, NLRP3 binds ADP and is autoinhibited. Inactive NLRP3 forms homodecameric double-ring cages that hide pyrin domains within NACHT-LRR rings to avoid premature activation. NLRP3 activation stimuli include extracellular ATP, nigericin, reactive oxygen species, crystals of monosodium urate or cholesterol, amyloid-beta fibers, environmental or industrial particles and nanoparticles, such as asbestos, silica, aluminum salts, cytosolic dsRNA, etc. Almost all stimuli trigger intracellular K(+) efflux. These stimuli lead to membrane perturbations that induce activation of NLRP3. Upon activation, NLRP3 is transported to microtubule organizing center (MTOC), where it is unlocked by NEK7, leading to its relocalization to dispersed trans-Golgi network (dTGN) vesicle membranes and recruitment of PYCARD/ASC for the formation of an active inflammasome complex. NEK7-activated NLRP3 forms a disk-shaped inflammasome. NLRP3 and PYCARD/ASC interact via their respective pyrin domains; interaction initiates speck formation (nucleation) which greatly enhances further addition of soluble PYCARD/ASC molecules to the speck in a prion-like polymerization process. Clustered PYCARD/ASC nucleates the formation of CASP1 filaments through the interaction of their respective CARD domains, acting as a platform for CASP1 polymerization and activation. Active CASP1 then processes IL1B and IL18 precursors, leading to the release of mature cytokines in the extracellular milieu and inflammatory response. NLRP3 inflammasome assembly is inhibited by IRGM, which impedes NLRP3 oligomerization. NLRP3 inflammasome is inhibited by cyclic AMP (cAMP), which directly binds NLRP3; inhibition is relieved by calcium-sensing receptor CASR, which inhibits production of cAMP. Specifically inhibited by sulfonylurea MCC950 (also named CP-456,773, CRID3), a potent and specific small-molecule inhibitor of the NLRP3 inflammasome that acts by preventing ATP hydrolysis. Sensor component of the NLRP3 inflammasome, which mediates inflammasome activation in response to defects in membrane integrity, leading to secretion of inflammatory cytokines IL1B and IL18 and pyroptosis. In response to pathogens and other damage-associated signals that affect the integrity of membranes, initiates the formation of the inflammasome polymeric complex composed of NLRP3, CASP1 and PYCARD/ASC. Recruitment of pro-caspase-1 (proCASP1) to the NLRP3 inflammasome promotes caspase-1 (CASP1) activation, which subsequently cleaves and activates inflammatory cytokines IL1B and IL18 and gasdermin-D (GSDMD), promoting cytokine secretion and pyroptosis. Activation of NLRP3 inflammasome is also required for HMGB1 secretion; stimulating inflammatory responses. Under resting conditions, ADP-bound NLRP3 is autoinhibited. NLRP3 activation stimuli include extracellular ATP, nigericin, reactive oxygen species, crystals of monosodium urate or cholesterol, amyloid-beta fibers, environmental or industrial particles and nanoparticles, such as asbestos, silica, aluminum salts, cytosolic dsRNA, etc. Almost all stimuli trigger intracellular K(+) efflux. These stimuli lead to membrane perturbation and activation of NLRP3. Upon activation, NLRP3 is transported to microtubule organizing center (MTOC), where it is unlocked by NEK7, leading to its relocalization to dispersed trans-Golgi network (dTGN) vesicle membranes and formation of an active inflammasome complex. Associates with dTGN vesicle membranes by binding to phosphatidylinositol 4-phosphate (PtdIns4P). Shows ATPase activity. In terms of biological role, independently of inflammasome activation, regulates the differentiation of T helper 2 (Th2) cells and has a role in Th2 cell-dependent asthma and tumor growth. During Th2 differentiation, required for optimal IRF4 binding to IL4 promoter and for IRF4-dependent IL4 transcription. Binds to the consensus DNA sequence 5'-GRRGGNRGAG-3'. May also participate in the transcription of IL5, IL13, GATA3, CCR3, CCR4 and MAF. The sequence is that of NACHT, LRR and PYD domains-containing protein 3 from Rattus norvegicus (Rat).